A 360-amino-acid polypeptide reads, in one-letter code: Abhydrolase domain-containing protein lid-1 (360 aa).

Residues 73–203 form the AB hydrolase-1 domain; it reads AIVFIPGLGA…MSFLGGVAGY (131 aa).

Belongs to the peptidase S33 family. ABHD4/ABHD5 subfamily. In terms of assembly, interacts with atgl-1.

It is found in the lipid droplet. In terms of biological role, acts coordinately with atgl-1 within the lipolytic cascade to distribute stored energy to tissues during nutritional deprivation. This Caenorhabditis elegans protein is Abhydrolase domain-containing protein lid-1.